Here is a 99-residue protein sequence, read N- to C-terminus: Integration host factor subunit alpha (99 aa).

It belongs to the bacterial histone-like protein family. As to quaternary structure, heterodimer of an alpha and a beta chain.

In terms of biological role, this protein is one of the two subunits of integration host factor, a specific DNA-binding protein that functions in genetic recombination as well as in transcriptional and translational control. The protein is Integration host factor subunit alpha of Stenotrophomonas maltophilia (strain R551-3).